A 122-amino-acid chain; its full sequence is Large ribosomal subunit protein uL14 (122 aa).

The protein belongs to the universal ribosomal protein uL14 family. In terms of assembly, part of the 50S ribosomal subunit. Forms a cluster with proteins L3 and L19. In the 70S ribosome, L14 and L19 interact and together make contacts with the 16S rRNA in bridges B5 and B8.

Binds to 23S rRNA. Forms part of two intersubunit bridges in the 70S ribosome. This is Large ribosomal subunit protein uL14 from Mycolicibacterium vanbaalenii (strain DSM 7251 / JCM 13017 / BCRC 16820 / KCTC 9966 / NRRL B-24157 / PYR-1) (Mycobacterium vanbaalenii).